The chain runs to 191 residues: UPF0312 protein Shew185_3055 (191 aa).

Residues 1 to 22 form the signal peptide; the sequence is MKKQLLSALIGASLLAPMAASA.

This sequence belongs to the UPF0312 family. Type 1 subfamily.

The protein resides in the periplasm. The sequence is that of UPF0312 protein Shew185_3055 from Shewanella baltica (strain OS185).